The primary structure comprises 52 residues: Conotoxin Ac4.3a (52 aa).

Positions 1-11 (SDFRNAAVHER) are excised as a propeptide. Residue glutamine 12 is modified to Pyrrolidone carboxylic acid. A 4-carboxyglutamate modification is found at glutamate 14. 2 O-linked (HexNAc...) threonine glycosylation sites follow: threonine 18 and threonine 20. A 4-hydroxyproline mark is found at proline 28, proline 33, and proline 47. The residue at position 47 (proline 47) is a Proline amide. Residues 48 to 52 (GRRND) constitute a propeptide that is removed on maturation.

It belongs to the conotoxin A superfamily. Contains 3 disulfide bonds. Expressed by the venom duct.

Its subcellular location is the secreted. Functionally, probable neurotoxin with ion channel inhibitor activity. The polypeptide is Conotoxin Ac4.3a (Conus achatinus (Little frog cone)).